Here is a 506-residue protein sequence, read N- to C-terminus: MEEFKRDLELDRSQQHDFIYPLIFQEYIYALAHDRGLNRSIVLENPGYDNKSSLLIVKRLIIHLITQMYQQNHFLFSANDSNKKKIVGYNTNFYSQMIFXGFAVVVEIPFSLXLLSSLEGKEIVKSQNFQSXXXXXXXXXXXXXXXXXXXXXXXXXXXXXXXXXXXXXXXXXXXXXXXXLRFFLHAYHNWNSLMTQKKSSFSFSKKNKRLFLFLYNFHVCEYESIFVFLRNQSSHLRSISSETFLERIYFYRKIELXVFTKDFKAILWVFKXPFLHYVRYQGKSTLASKGTSLLMNKWKYYLVKFWQCYFYMWSQPRRIHINQLSNDSLDFLGYLSSVRLNPLMVRSQMLKNAFLIGNAFXKFDTLVPIIPMIGSLSKAKFGNVLGHPMNXSVWADLSNPDIMDRFXRXFRNLSHYHSGSLKKMSLYRVKYILRLSCARTLARKHKSTVRAFLKRLGVGLLEEFFTEEEQVFYLTFPKASSSSGELYRRRIWYLDIICINELANHS.

It belongs to the intron maturase 2 family. MatK subfamily.

The protein resides in the plastid. It is found in the chloroplast. Functionally, usually encoded in the trnK tRNA gene intron. Probably assists in splicing its own and other chloroplast group II introns. This is Maturase K from Arctostaphylos uva-ursi (Bearberry).